The primary structure comprises 362 residues: MNRGVLESSPVQHLTAAGNPNWWNNVSRGLRPPTPLMSHEPPSTTAFIPSLLPNFFSSPTSSSSSSPSFPPPNSNPNFSSWLEMSDLPLDQPWSLSQLLLGGLMMGEEEKMEMMNHHHHQNQHQSYQAKRIQNWEEQVLRHQASMKQESSNNNSYGIMSSPNSPPNKSCATIINTNEDNNNNIHSGLNLSECNSSEMIGSSFANKKPKLQVPSSQSTLKVRKEKLGGRIASLHQLVSPFGKTDTASVLSEAIGYIRFLHSQIEALSLPYFGTPSRNNMMHQHAQRNMNGIFPEDPGQLVNEYCMKRGVSLSSTDNQKSNPNEEPMKDLRSRGLCLVPISCTLQVGSDNGADYWAPAFGTTLQ.

One can recognise a bHLH domain in the interval 209–258 (LQVPSSQSTLKVRKEKLGGRIASLHQLVSPFGKTDTASVLSEAIGYIRFL).

The protein belongs to the bHLH protein family. Homodimer.

It localises to the nucleus. In Arabidopsis thaliana (Mouse-ear cress), this protein is Transcription factor bHLH133 (BHLH133).